We begin with the raw amino-acid sequence, 110 residues long: Thioredoxin (110 aa).

Positions 2 to 110 constitute a Thioredoxin domain; that stretch reads SALLVEIDKD…IDAMIAKHVG (109 aa). Cysteines 33 and 36 form a disulfide.

Belongs to the thioredoxin family.

In terms of biological role, participates in various redox reactions through the reversible oxidation of its active center dithiol to a disulfide and catalyzes dithiol-disulfide exchange reactions. The polypeptide is Thioredoxin (trxA) (Peptoclostridium acidaminophilum (Eubacterium acidaminophilum)).